Here is a 170-residue protein sequence, read N- to C-terminus: Cyclic pyranopterin monophosphate synthase 1 (170 aa).

Substrate-binding positions include leucine 79–histidine 81 and methionine 116–glutamate 117. Aspartate 131 is a catalytic residue.

This sequence belongs to the MoaC family. Homohexamer; trimer of dimers.

The enzyme catalyses (8S)-3',8-cyclo-7,8-dihydroguanosine 5'-triphosphate = cyclic pyranopterin phosphate + diphosphate. Its pathway is cofactor biosynthesis; molybdopterin biosynthesis. In terms of biological role, catalyzes the conversion of (8S)-3',8-cyclo-7,8-dihydroguanosine 5'-triphosphate to cyclic pyranopterin monophosphate (cPMP). The protein is Cyclic pyranopterin monophosphate synthase 1 (moaC1) of Mycobacterium bovis (strain ATCC BAA-935 / AF2122/97).